The sequence spans 209 residues: MVKIFQHPLINAKLTTMRSKETSYKDFRDNLNEIASLMVYETLRDYQTKKISITTPMNVKYEGETLDREIVIIPILRAGLGMLNGIMNLVPQARVGHIGMYRNEETNEVVEYFFKIPEVPHDSYIIIVDPMLATGSSACDAIAKLDKLGFNNIKLVCLVGVQQGIDKVTKQFPNVDIYLASKDEKLNEHNYILPGLGDAGDRIFGTKIK.

Residues arginine 77, arginine 102, and 129-137 contribute to the 5-phospho-alpha-D-ribose 1-diphosphate site; that span reads DPMLATGSS. Uracil-binding positions include isoleucine 192 and 197-199; that span reads GDA. A 5-phospho-alpha-D-ribose 1-diphosphate-binding site is contributed by aspartate 198.

This sequence belongs to the UPRTase family. Mg(2+) serves as cofactor.

The enzyme catalyses UMP + diphosphate = 5-phospho-alpha-D-ribose 1-diphosphate + uracil. The protein operates within pyrimidine metabolism; UMP biosynthesis via salvage pathway; UMP from uracil: step 1/1. Its activity is regulated as follows. Allosterically activated by GTP. Its function is as follows. Catalyzes the conversion of uracil and 5-phospho-alpha-D-ribose 1-diphosphate (PRPP) to UMP and diphosphate. The polypeptide is Uracil phosphoribosyltransferase (Metamycoplasma hominis (Mycoplasma hominis)).